The primary structure comprises 512 residues: Kynurenine 3-monooxygenase (512 aa).

The protein belongs to the aromatic-ring hydroxylase family. KMO subfamily. It depends on FAD as a cofactor.

It is found in the mitochondrion outer membrane. It carries out the reaction L-kynurenine + NADPH + O2 + H(+) = 3-hydroxy-L-kynurenine + NADP(+) + H2O. The protein operates within cofactor biosynthesis; NAD(+) biosynthesis; quinolinate from L-kynurenine: step 1/3. Catalyzes the hydroxylation of L-kynurenine (L-Kyn) to form 3-hydroxy-L-kynurenine (L-3OHKyn). Required for synthesis of quinolinic acid. The protein is Kynurenine 3-monooxygenase (bna4) of Neosartorya fischeri (strain ATCC 1020 / DSM 3700 / CBS 544.65 / FGSC A1164 / JCM 1740 / NRRL 181 / WB 181) (Aspergillus fischerianus).